The chain runs to 304 residues: MVKLQYLLSILLYAYSCTALMLDRRDPTPGQLSQVTDFGDNPTNVGFYIYVPQNLASNPAIIVAIHYCTGTAQAYYSGTPYAQYAETYGFIVIYPESPYSGTCWDVSSQSTLTHNGGGNSNSIANMVDWTINQYNADASRVYVTGTSSGAMMTNVMAATYPNLFAAGIAYAGVPAGCFYSEANVEDQWNSTCAQGQSISTPEHWAQIAQAMYSGYEGSRPKMQIYHGSADATLYPQNYYETCKQWAGVFGYNYDSPQEVQNDTPVAGWAKTIWGENLQGILADGVGHNIQIQGEEDLKWFGFTS.

An N-terminal signal peptide occupies residues 1 to 19 (MVKLQYLLSILLYAYSCTA). Ser147 (charge relay system) is an active-site residue. Asn189 carries an N-linked (GlcNAc...) asparagine glycan.

Belongs to the carbohydrate esterase 1 (CE1) family. AxeA subfamily. As to quaternary structure, monomer.

Its subcellular location is the secreted. It carries out the reaction Deacetylation of xylans and xylo-oligosaccharides.. It participates in glycan degradation; xylan degradation. Its function is as follows. Acetylxylan esterase involved in the hydrolysis of xylan, a major structural heterogeneous polysaccharide found in plant biomass representing the second most abundant polysaccharide in the biosphere, after cellulose. Degrades acetylated xylans by cleaving acetyl side groups from the hetero-xylan backbone. This chain is Acetylxylan esterase A (axeA), found in Emericella nidulans (strain FGSC A4 / ATCC 38163 / CBS 112.46 / NRRL 194 / M139) (Aspergillus nidulans).